We begin with the raw amino-acid sequence, 289 residues long: Putative transmembrane protein ORF111 (289 aa).

The next 5 membrane-spanning stretches (helical) occupy residues 1 to 21 (MIGP…IFML), 112 to 132 (AIIT…VCIA), 151 to 171 (IGIT…FIVI), 189 to 209 (LNIS…TSIL), and 261 to 281 (YLLT…IGVG).

It is found in the host membrane. The chain is Putative transmembrane protein ORF111 from Ostreid herpesvirus 1 (isolate France) (OsHV-1).